A 359-amino-acid chain; its full sequence is 3-dehydroquinate synthase (359 aa).

Residues 71 to 76, 105 to 109, 129 to 130, lysine 142, lysine 151, and 169 to 172 contribute to the NAD(+) site; these read DGEQFK, GVIGD, TT, and CLQT. Residues glutamate 184, histidine 247, and histidine 264 each coordinate Zn(2+).

This sequence belongs to the sugar phosphate cyclases superfamily. Dehydroquinate synthase family. Co(2+) is required as a cofactor. Requires Zn(2+) as cofactor. The cofactor is NAD(+).

The protein resides in the cytoplasm. It carries out the reaction 7-phospho-2-dehydro-3-deoxy-D-arabino-heptonate = 3-dehydroquinate + phosphate. It participates in metabolic intermediate biosynthesis; chorismate biosynthesis; chorismate from D-erythrose 4-phosphate and phosphoenolpyruvate: step 2/7. Functionally, catalyzes the conversion of 3-deoxy-D-arabino-heptulosonate 7-phosphate (DAHP) to dehydroquinate (DHQ). In Shewanella sp. (strain ANA-3), this protein is 3-dehydroquinate synthase.